The following is a 684-amino-acid chain: Suppressor of presenilin protein 3 (684 aa).

5 C2H2-type zinc fingers span residues 21–43 (YKCHLCGQCFYRGCGLASHLRRH), 48–71 (FDCEHCAYTCKHKYAYDRHLLQSH), 123–145 (YKCPLCISTFGSHARAVYHILSH), 261–283 (YLCRNCPYVSWNVSSLWRHFRHH), and 291–313 (WTCIACSYSSSSRVKIDLHVKMH). 3 disordered regions span residues 337–359 (DLNKPTNKKKKPDGGNGSNHSDM), 419–440 (KNNSNPTVLPNKRNSIKTSKSD), and 469–501 (TSKFYRPESPDSLASNNSAHGDEIESTSSDQFQ). 2 consecutive C2H2-type zinc fingers follow at residues 590–612 (RECTDCPFKHNDLQQFRLHRDKH) and 618–641 (HTCPECNYSSNNHNQVVEHTFVDH). The interval 652 to 684 (LPSSDSEDDNIPVPPDTPQRKKKAPKRGKRRGW) is disordered. A compositionally biased stretch (basic residues) spans 671 to 684 (RKKKAPKRGKRRGW).

Its subcellular location is the nucleus. In terms of biological role, probable transcriptional regulator, which participates in the transcriptional repression of the presenilin protein hop-1. The chain is Suppressor of presenilin protein 3 (spr-3) from Caenorhabditis elegans.